A 372-amino-acid polypeptide reads, in one-letter code: Proton-coupled zinc antiporter SLC30A2 (372 aa).

Topologically, residues 1–140 are cytoplasmic; it reads MEAKEKQHLL…TMNFGWQRAE (140 aa). The Mitochondrial localization signal motif lies at 51–54; the sequence is HHCH. Zn(2+)-binding residues include Cys53, His106, and Asp110. Residues 141-161 traverse the membrane as a helical segment; the sequence is ILGALVSVLSIWVVTGVLVYL. Topologically, residues 162-175 are lumenal; that stretch reads AVERLISGDYEIDG. The helical transmembrane segment at 176–196 threads the bilayer; sequence GTMLITSGCAVAVNIIMGLTL. The Cytoplasmic portion of the chain corresponds to 197 to 220; it reads HQSGHGHSHGTTNQQEENPSVRAA. The helical transmembrane segment at 221–241 threads the bilayer; it reads FIHVIGDFMQSMGVLVAAYIL. The Zn(2+) site is built by His223 and Asp227. Over 242 to 249 the chain is Lumenal; that stretch reads YFKPEYKY. Residues 250–270 form a helical membrane-spanning segment; that stretch reads VDPICTFVFSILVLGTTLTIL. The Cytoplasmic segment spans residues 271–304; sequence RDVILVLMEGTPKGVDFTAVRDLLLSVEGVEALH. The Lysosomal targeting motif signature appears at 294 to 295; that stretch reads LL. Ser296 carries the post-translational modification Phosphoserine. Residues His304, His321, and Glu355 each coordinate Zn(2+). Residues 305–325 form a helical membrane-spanning segment; that stretch reads SLHIWALTVAQPVLSVHIAIA. The Lumenal portion of the chain corresponds to 326 to 372; sequence QNTDAQAVLKTASSRLQGKFHFHTVTIQIEDYSEDMKDCQACQGPSD.

This sequence belongs to the cation diffusion facilitator (CDF) transporter (TC 2.A.4) family. SLC30A subfamily. In terms of assembly, homodimer. Interacts (via lysosomal targeting motif) with AP3D1; in AP-3-mediated transport to lysosomes. Interacts with TMEM163. In terms of processing, phosphorylated at Ser-296. Phosphorylation at Ser-296 prevents localization to lysosomes. Dephosphorylation of Ser-296 which triggers localization to lysosomes, accumulation of zinc into lysosomes and lysosomal-mediated cell death is induced by TNF-alpha.

The protein localises to the cytoplasmic vesicle. It localises to the secretory vesicle membrane. It is found in the zymogen granule membrane. The protein resides in the endosome membrane. Its subcellular location is the lysosome membrane. The protein localises to the mitochondrion inner membrane. It localises to the cell membrane. It carries out the reaction Zn(2+)(in) + 2 H(+)(out) = Zn(2+)(out) + 2 H(+)(in). Functionally, electroneutral proton-coupled antiporter concentrating zinc ions into a variety of intracellular organelles including endosomes, zymogen granules and mitochondria. Thereby, plays a crucial role in cellular zinc homeostasis to confer upon cells protection against its potential cytotoxicity. Regulates the zinc concentration of milk, through the transport of zinc ions into secretory vesicles of mammary cells. By concentrating zinc ions into lysosomes participates to lysosomal-mediated cell death during early mammary gland involution. Electroneutral proton-coupled antiporter mediating the efflux of zinc ions through the plasma membrane. The polypeptide is Proton-coupled zinc antiporter SLC30A2 (Homo sapiens (Human)).